The following is a 556-amino-acid chain: Formate--tetrahydrofolate ligase (556 aa).

65–72 (TPAGEGKS) is a binding site for ATP.

The protein belongs to the formate--tetrahydrofolate ligase family.

The enzyme catalyses (6S)-5,6,7,8-tetrahydrofolate + formate + ATP = (6R)-10-formyltetrahydrofolate + ADP + phosphate. The protein operates within one-carbon metabolism; tetrahydrofolate interconversion. In Streptococcus thermophilus (strain ATCC BAA-491 / LMD-9), this protein is Formate--tetrahydrofolate ligase.